A 444-amino-acid polypeptide reads, in one-letter code: Exodeoxyribonuclease 7 large subunit (444 aa).

This sequence belongs to the XseA family. As to quaternary structure, heterooligomer composed of large and small subunits.

It is found in the cytoplasm. The enzyme catalyses Exonucleolytic cleavage in either 5'- to 3'- or 3'- to 5'-direction to yield nucleoside 5'-phosphates.. Bidirectionally degrades single-stranded DNA into large acid-insoluble oligonucleotides, which are then degraded further into small acid-soluble oligonucleotides. The sequence is that of Exodeoxyribonuclease 7 large subunit from Rickettsia canadensis (strain McKiel).